A 313-amino-acid chain; its full sequence is Porphobilinogen deaminase (313 aa).

Position 242 is an S-(dipyrrolylmethanemethyl)cysteine (Cys-242).

Belongs to the HMBS family. Monomer. Dipyrromethane is required as a cofactor.

The catalysed reaction is 4 porphobilinogen + H2O = hydroxymethylbilane + 4 NH4(+). Its pathway is porphyrin-containing compound metabolism; protoporphyrin-IX biosynthesis; coproporphyrinogen-III from 5-aminolevulinate: step 2/4. Its function is as follows. Tetrapolymerization of the monopyrrole PBG into the hydroxymethylbilane pre-uroporphyrinogen in several discrete steps. In Proteus mirabilis (strain HI4320), this protein is Porphobilinogen deaminase.